We begin with the raw amino-acid sequence, 219 residues long: Clathrin light chain (219 aa).

The segment at 32–136 is disordered; it reads AEITGGSASA…KKEELRQQSK (105 aa). The interval 96-158 is involved in binding clathrin heavy chain; sequence PPPSREEPEK…SISKTKLASR (63 aa). Residues 99–136 show a composition bias toward basic and acidic residues; that stretch reads SREEPEKIRKWREEQKQRLEEKDIEEERKKEELRQQSK.

It belongs to the clathrin light chain family. Clathrin coats are formed from molecules containing 3 heavy chains and 3 light chains.

It is found in the cytoplasmic vesicle membrane. It localises to the membrane. Its subcellular location is the coated pit. Its function is as follows. Clathrin is the major protein of the polyhedral coat of coated pits and vesicles. The polypeptide is Clathrin light chain (Clc) (Drosophila melanogaster (Fruit fly)).